We begin with the raw amino-acid sequence, 689 residues long: MNQNFSSMIDRYKYQQLRIGSVSPQQISAWANKILPNGEIVGEVTKPYTFHYKTNKPEKDGLFCERISGPIKSGICACGNYRVIGDEKEGPKFCEQCGVESVDSRIRRYQMGYIKLACPVTHVWYLKRLPSYIANLLDKPLKELEGLVYCDFSFARPIAKKPTFLRLRGSFEYEIQSRKYSIPLFFTTQGFDTFRNREISTGASAIREQLADPDLRIIMDRSLVEWKELGEEGSTGNAWEDRKIGRRKDFLVKRMELAKHFLRTNVEPERMVLCLLPVLPPELRPIIQIDGGKPMSSDINELYRRVIYRNNTLTDPLTTSRSTPGELVLCQEKLVQEAVDTLLDNGIRGQPMRDGHNKVYKSFSDVIEGKEGRFRETLLGKRVDYSGRSVIVVGPSLSLHRCGLPREIAIELFQTFVIRGLIRQRVASNIGIAKSKIREKEPIVWEILQEVMRGHPVLLNRAPTLHRLGIQAFQPIIGEGRAICLHPLVRKGFNADFDGDQMAVHVPLSLEAQTEARLLMFSHMNLLSPAIGDPISVPTQDMLIGLYVLTIGNHRGICANRYNPCNYRNYQNETVDDNNYQYTKEKEPHFCSSYDALGAYRQKRINLYSPLWLRWRLDQRVIASREVPIEVQYESLGTYHEIYGHYQIVRSIKKEILCIYIRTTIGHISFYREIEEAVQGFCRAYSYGT.

The Zn(2+) site is built by C76, C78, C94, and C97. Residues D496, D498, and D500 each contribute to the Mg(2+) site.

The protein belongs to the RNA polymerase beta' chain family. RpoC1 subfamily. In terms of assembly, in plastids the minimal PEP RNA polymerase catalytic core is composed of four subunits: alpha, beta, beta', and beta''. When a (nuclear-encoded) sigma factor is associated with the core the holoenzyme is formed, which can initiate transcription. The cofactor is Mg(2+). Zn(2+) is required as a cofactor.

It localises to the plastid. The protein localises to the chloroplast. The catalysed reaction is RNA(n) + a ribonucleoside 5'-triphosphate = RNA(n+1) + diphosphate. In terms of biological role, DNA-dependent RNA polymerase catalyzes the transcription of DNA into RNA using the four ribonucleoside triphosphates as substrates. The chain is DNA-directed RNA polymerase subunit beta' from Illicium oligandrum (Star anise).